Here is a 466-residue protein sequence, read N- to C-terminus: Adenosylhomocysteinase (466 aa).

Positions 57, 132, and 192 each coordinate substrate. 193–195 contacts NAD(+); sequence TTT. The substrate site is built by lysine 222 and aspartate 226. NAD(+) contacts are provided by residues asparagine 227, 256–261, glutamate 279, asparagine 314, 335–337, and asparagine 380; these read GYGDVG and IGH.

The protein belongs to the adenosylhomocysteinase family. The cofactor is NAD(+).

Its subcellular location is the cytoplasm. It carries out the reaction S-adenosyl-L-homocysteine + H2O = L-homocysteine + adenosine. It participates in amino-acid biosynthesis; L-homocysteine biosynthesis; L-homocysteine from S-adenosyl-L-homocysteine: step 1/1. Its function is as follows. May play a key role in the regulation of the intracellular concentration of adenosylhomocysteine. The chain is Adenosylhomocysteinase from Rhizobium etli (strain CIAT 652).